A 395-amino-acid polypeptide reads, in one-letter code: Calreticulin (395 aa).

Positions 1–15 (MKSLCLLAIVAVVSA) are cleaved as a signal peptide. Cysteines 101 and 133 form a disulfide. An alpha-D-glucoside contacts are provided by tyrosine 105, lysine 107, tyrosine 124, and aspartate 131. 7 consecutive repeat copies span residues 186–197 (AQTGSLEEDWDL), 205–216 (DPDAKKPEDWDE), 222–233 (DAEDAKPEDWEK), 239–250 (DPDAKKPEDWDD), 254–264 (GEWEPPMIDNP), 268–278 (GEWKPKQIKNP), and 282–292 (GKWIHPEIENP). A 4 X approximate repeats region spans residues 186–250 (AQTGSLEEDW…DAKKPEDWDD (65 aa)). The tract at residues 193-301 (EDWDLLPAKK…PEYTPDDELY (109 aa)) is P-domain. Over residues 202–212 (KIKDPDAKKPE) the composition is skewed to basic and acidic residues. A disordered region spans residues 202-255 (KIKDPDAKKPEDWDEREYIDDAEDAKPEDWEKPEHIPDPDAKKPEDWDDEMDGE). The segment covering 213 to 224 (DWDEREYIDDAE) has biased composition (acidic residues). A compositionally biased stretch (basic and acidic residues) spans 225-246 (DAKPEDWEKPEHIPDPDAKKPE). Positions 254–292 (GEWEPPMIDNPEYKGEWKPKQIKNPAYKGKWIHPEIENP) are 3 X approximate repeats. Residues 302–395 (SYESWGAIGF…KEEEEGHDEL (94 aa)) form a C-domain region. Aspartate 312 provides a ligand contact to an alpha-D-glucoside. Residues 340 to 380 (ETFDKLKTVEKEKKEKADEETRKAEEEARKKAEEEKEAKKD) show a composition bias toward basic and acidic residues. The segment at 340–395 (ETFDKLKTVEKEKKEKADEETRKAEEEARKKAEEEKEAKKDDDEEEKEEEEGHDEL) is disordered. A compositionally biased stretch (acidic residues) spans 381 to 395 (DDEEEKEEEEGHDEL). Positions 392–395 (HDEL) match the Prevents secretion from ER motif.

Belongs to the calreticulin family. Post-translationally, cleaved by caspase ced-3 in vitro.

The protein localises to the endoplasmic reticulum lumen. In terms of biological role, molecular calcium-binding chaperone promoting folding, oligomeric assembly and quality control in the endoplasmic reticulum (ER) via the calreticulin/calnexin cycle. This lectin may interact transiently with almost all of the monoglucosylated glycoproteins that are synthesized in the ER. Probably by controlling the folding of extracellular matrix protein unc-52/Perlecan, may play a role in the formation of fibrous organelles, a hemidesmosome-like structure attaching muscles to the epidermis. Protects dopaminergic neurons against oxidative stress-induced neurodegeneration. May play a role in protection against ER stress. Plays a role in modulating lifespan, acting by influencing ER calcium homeostasis. This is Calreticulin (crt-1) from Caenorhabditis elegans.